We begin with the raw amino-acid sequence, 472 residues long: UDP-glucosyltransferase 103 (472 aa).

Histidine 15 (proton acceptor) is an active-site residue. Histidine 15 is an an anthocyanidin binding site. The active-site Charge relay is the aspartate 117. UDP-alpha-D-glucose is bound by residues alanine 344, glutamine 346, histidine 361, tryptophan 364, asparagine 365, serine 366, and glutamate 369. Glycine 384 contacts an anthocyanidin. The UDP-alpha-D-glucose site is built by glutamate 385 and glutamine 386.

This sequence belongs to the UDP-glycosyltransferase family.

The catalysed reaction is (20S)-ginsenoside F1 + UDP-alpha-D-glucose = (20S)-ginsenoside Rg1 + UDP + H(+). The protein operates within secondary metabolite biosynthesis; terpenoid biosynthesis. In terms of biological role, probable component of the triterpene saponins (e.g. ginsenosides) biosynthetic pathway. No detectable activity toward protopanaxatriol (PPT). This chain is UDP-glucosyltransferase 103, found in Panax ginseng (Korean ginseng).